We begin with the raw amino-acid sequence, 314 residues long: Solute carrier family 25 member 33 (314 aa).

Solcar repeat units lie at residues 4 to 111 (KDTL…SKET), 119 to 206 (NSGV…LKKY), and 224 to 308 (SDFL…IVHL). 6 helical membrane passes run 7–27 (LLHLFAGGCGGTVGAIMTCPL), 44–58 (VFQVQLGTLNGAGVI), 114–134 (GIFVPNSGVVHMSSAGFAAFI), 183–203 (LTASYAGISETMICFLIYETL), 226–246 (FLGLMFAAAFAKGCASCIAYP), and 291–311 (QIPNTAIVLSTYELIVHLLAE).

It belongs to the mitochondrial carrier (TC 2.A.29) family.

Its subcellular location is the mitochondrion inner membrane. Functionally, mitochondrial transporter that imports/exports pyrimidine nucleotides into and from mitochondria which participates in dendritic cell endocytosis. The chain is Solute carrier family 25 member 33 (slc25a33) from Danio rerio (Zebrafish).